We begin with the raw amino-acid sequence, 700 residues long: Receptor-type tyrosine-protein phosphatase epsilon (700 aa).

An N-terminal signal peptide occupies residues 1–19 (MEPLCPLLLVGFSLPLARA). Topologically, residues 20 to 46 (LRGNETTADSNETTTTSGPPDPGASQP) are extracellular. 2 N-linked (GlcNAc...) asparagine glycosylation sites follow: Asn23 and Asn30. The helical transmembrane segment at 47 to 69 (LLAWLLLPLLLLLLVLLLAAYFF) threads the bilayer. Residues 70-700 (RFRKQRKAVV…DIFSDYANFK (631 aa)) are Cytoplasmic-facing. Tyrosine-protein phosphatase domains lie at 135–394 (FREE…LLEY) and 426–689 (LEEE…VQDF). Residues Asp303, 335-341 (CSAGVGR), and Gln379 each bind substrate. Catalysis depends on Cys335, which acts as the Phosphocysteine intermediate. The Phosphocysteine intermediate role is filled by Cys630. Tyr696 is modified (phosphotyrosine).

It belongs to the protein-tyrosine phosphatase family. Receptor class 4 subfamily. Monomer. Isoform 2: Homodimer. Can form oligomers. Dimerization is increased by oxidative stress and decreased by EGFR. Isoform 2 interacts with GRB2. In terms of processing, a catalytically active cytoplasmic form (p65) is produced by proteolytic cleavage of either isoform 1, isoform 2 or isoform 3. Isoform 1 and isoform 2 are phosphorylated on tyrosine residues by tyrosine kinase Neu. Post-translationally, isoform 1 is glycosylated. As to expression, expressed in giant cell tumor (osteoclastoma rich in multinucleated osteoclastic cells).

It is found in the cell membrane. The protein resides in the cytoplasm. It catalyses the reaction O-phospho-L-tyrosyl-[protein] + H2O = L-tyrosyl-[protein] + phosphate. Its function is as follows. Isoform 1 plays a critical role in signaling transduction pathways and phosphoprotein network topology in red blood cells. May play a role in osteoclast formation and function. In terms of biological role, isoform 2 acts as a negative regulator of insulin receptor (IR) signaling in skeletal muscle. Regulates insulin-induced tyrosine phosphorylation of insulin receptor (IR) and insulin receptor substrate 1 (IRS-1), phosphorylation of protein kinase B and glycogen synthase kinase-3 and insulin induced stimulation of glucose uptake. Isoform 1 and isoform 2 act as a negative regulator of FceRI-mediated signal transduction leading to cytokine production and degranulation, most likely by acting at the level of SYK to affect downstream events such as phosphorylation of SLP76 and LAT and mobilization of Ca(2+). The sequence is that of Receptor-type tyrosine-protein phosphatase epsilon (PTPRE) from Homo sapiens (Human).